The chain runs to 436 residues: GDP-mannose 6-dehydrogenase (436 aa).

NAD(+)-binding residues include tyrosine 10, valine 11, aspartate 30, lysine 35, threonine 86, and threonine 124. Positions 161, 210, 214, 217, 225, 256, 257, 259, and 265 each coordinate GDP-alpha-D-mannuronate. Residue cysteine 268 is part of the active site. An NAD(+)-binding site is contributed by lysine 271. Residue lysine 324 coordinates GDP-alpha-D-mannuronate. Arginine 331 contributes to the NAD(+) binding site.

It belongs to the UDP-glucose/GDP-mannose dehydrogenase family.

The catalysed reaction is GDP-alpha-D-mannose + 2 NAD(+) + H2O = GDP-alpha-D-mannuronate + 2 NADH + 3 H(+). It functions in the pathway glycan biosynthesis; alginate biosynthesis. Catalyzes the oxidation of guanosine diphospho-D-mannose (GDP-D-mannose) to GDP-D-mannuronic acid, a precursor for alginate polymerization. The alginate layer causes a mucoid phenotype and is essential for cyst formation. The protein is GDP-mannose 6-dehydrogenase (algD) of Azotobacter vinelandii.